A 213-amino-acid polypeptide reads, in one-letter code: NADH-quinone oxidoreductase subunit C (213 aa).

It belongs to the complex I 30 kDa subunit family. In terms of assembly, NDH-1 is composed of 14 different subunits. Subunits NuoB, C, D, E, F, and G constitute the peripheral sector of the complex.

The protein localises to the cell inner membrane. The catalysed reaction is a quinone + NADH + 5 H(+)(in) = a quinol + NAD(+) + 4 H(+)(out). NDH-1 shuttles electrons from NADH, via FMN and iron-sulfur (Fe-S) centers, to quinones in the respiratory chain. The immediate electron acceptor for the enzyme in this species is believed to be ubiquinone. Couples the redox reaction to proton translocation (for every two electrons transferred, four hydrogen ions are translocated across the cytoplasmic membrane), and thus conserves the redox energy in a proton gradient. This Rhodospirillum rubrum (strain ATCC 11170 / ATH 1.1.1 / DSM 467 / LMG 4362 / NCIMB 8255 / S1) protein is NADH-quinone oxidoreductase subunit C.